Reading from the N-terminus, the 211-residue chain is ATP phosphoribosyltransferase (211 aa).

Belongs to the ATP phosphoribosyltransferase family. Short subfamily. Heteromultimer composed of HisG and HisZ subunits.

It localises to the cytoplasm. The enzyme catalyses 1-(5-phospho-beta-D-ribosyl)-ATP + diphosphate = 5-phospho-alpha-D-ribose 1-diphosphate + ATP. It participates in amino-acid biosynthesis; L-histidine biosynthesis; L-histidine from 5-phospho-alpha-D-ribose 1-diphosphate: step 1/9. In terms of biological role, catalyzes the condensation of ATP and 5-phosphoribose 1-diphosphate to form N'-(5'-phosphoribosyl)-ATP (PR-ATP). Has a crucial role in the pathway because the rate of histidine biosynthesis seems to be controlled primarily by regulation of HisG enzymatic activity. This Pseudomonas syringae pv. tomato (strain ATCC BAA-871 / DC3000) protein is ATP phosphoribosyltransferase.